A 109-amino-acid chain; its full sequence is Stress-response A/B barrel domain-containing protein HS1 (109 aa).

One can recognise a Stress-response A/B barrel domain in the interval 8–102 (VKHVLLASFK…SLDKVLVIDY (95 aa)). Val36, Ile39, Glu40, and Met42 together coordinate Mg(2+).

As to quaternary structure, homodimer. Mg(2+) is required as a cofactor.

Functionally, heat stable protein involved in defense against fungal pathogens. Possesses antifungal activity against diverse pathogenic fungi. Possesses antimicrobial activity. Possesses ribonuclease activity. The polypeptide is Stress-response A/B barrel domain-containing protein HS1 (Arabidopsis thaliana (Mouse-ear cress)).